A 174-amino-acid polypeptide reads, in one-letter code: Shikimate kinase (174 aa).

Residue 15–20 (GTGKST) participates in ATP binding. A Mg(2+)-binding site is contributed by Ser-19. Positions 37, 61, and 82 each coordinate substrate. Arg-120 contacts ATP. Residue Arg-138 participates in substrate binding.

Belongs to the shikimate kinase family. In terms of assembly, monomer. The cofactor is Mg(2+).

The protein resides in the cytoplasm. The catalysed reaction is shikimate + ATP = 3-phosphoshikimate + ADP + H(+). It functions in the pathway metabolic intermediate biosynthesis; chorismate biosynthesis; chorismate from D-erythrose 4-phosphate and phosphoenolpyruvate: step 5/7. Catalyzes the specific phosphorylation of the 3-hydroxyl group of shikimic acid using ATP as a cosubstrate. The polypeptide is Shikimate kinase (Staphylococcus aureus (strain MSSA476)).